The following is a 781-amino-acid chain: Chloride channel protein CLC-f (781 aa).

Disordered stretches follow at residues 1 to 41 and 79 to 98; these read MSSG…QSPA and RERH…EEDG. Residues 10–20 are compositionally biased toward basic and acidic residues; the sequence is NEDRHLLRSTD. 12 helical membrane-spanning segments follow: residues 129–149, 184–204, 221–241, 250–270, 279–299, 314–334, 350–370, 388–408, 433–453, 457–477, 502–522, and 523–543; these read WALL…VAGF, ILLI…LLEI, FLAG…LGTG, SVDI…NNRE, GAAS…FFAI, FTTA…NALL, AAEL…SVVF, FGLP…IIAL, APGI…TALC, GLVG…GAVF, ALVG…TSVL, and LLFE…AVGL. The disordered stretch occupies residues 553–584; that stretch reads QGKESDSSEGRSTGRGYSSLSPSERKTEGVWR. Positions 575 to 584 are enriched in basic and acidic residues; sequence SERKTEGVWR. CBS domains are found at residues 621 to 677 and 699 to 763; these read MSKN…NAST and QERG…EMSR. A helical transmembrane segment spans residues 726-746; the sequence is QLPVVKRGEVIHKGKRRKLLG.

The protein belongs to the chloride channel (TC 2.A.49) family. As to quaternary structure, homodimer.

Its subcellular location is the membrane. Functionally, voltage-gated chloride channel. The sequence is that of Chloride channel protein CLC-f (CLC-F) from Arabidopsis thaliana (Mouse-ear cress).